A 343-amino-acid chain; its full sequence is Cilia- and flagella-associated protein 36 (343 aa).

Residues Ser85 and Ser147 each carry the phosphoserine modification. The stretch at 147–187 (SDLEQEEMKILREVLRKSKEEYDQEEERKRKKQSSEAKMEE) forms a coiled coil. Residues 165–188 (KEEYDQEEERKRKKQSSEAKMEEL) form a disordered region. Ser201 carries the phosphoserine modification. 2 stretches are compositionally biased toward basic and acidic residues: residues 279 to 293 (QKRD…DTRT) and 301 to 323 (QKGK…AEEK). Residues 279 to 323 (QKRDKLLSMRKDTRTKQIQNTEQKGKPTREAEEMTEKPEMTAEEK) form a disordered region.

This sequence belongs to the CFAP36 family. In terms of assembly, interacts with ARL3.

Its subcellular location is the nucleus. The protein localises to the cytoplasm. It localises to the cell projection. The protein resides in the cilium. It is found in the flagellum. May act as an effector for ARL3. The polypeptide is Cilia- and flagella-associated protein 36 (Mus musculus (Mouse)).